Consider the following 390-residue polypeptide: Calcium-binding and spermatid-specific protein 1 (390 aa).

Disordered regions lie at residues 1–23 (MAED…TPTE), 82–109 (ASLK…KESI), and 146–225 (TIDA…TIPD). Acidic residues predominate over residues 162–174 (ETQEDSSANDEDT). A compositionally biased stretch (low complexity) spans 184 to 193 (TDVSSSTSSD). A phosphoserine mark is found at S251 and S267. At T280 the chain carries Phosphothreonine; by CK2. Position 312 is a phosphoserine (S312). Over residues 330-344 (EPHVDTKNSPEKDAA) the composition is skewed to basic and acidic residues. A disordered region spans residues 330 to 390 (EPHVDTKNSP…LKEEPDELMM (61 aa)). Phosphoserine occurs at positions 346, 356, 371, and 375. Residues 346–364 (SVTNVTEEFPSVTSVVEQS) show a composition bias toward polar residues.

Expressed in seminiferous tubules of the testis in step 10 spermatids (stage X), subsequently increasing to reach maximal levels of step 18 elongated spermatids (stage VI) (at protein level). Strongly expressed in testis. Weakly expressed in olfactory epithelium. Expressed in spermatids of seminiferous tubules at steps 4-14 (stages IV to XIV of the seminiferous epithelium classification).

The protein localises to the cytoplasm. The protein resides in the mitochondrion inner membrane. Its subcellular location is the cell projection. It is found in the cilium. It localises to the flagellum. The protein localises to the cytoplasmic vesicle. The protein resides in the secretory vesicle. Its subcellular location is the acrosome. Functionally, calcium-binding protein. Essential for maintaining the structural integrity of the sperm flagella. The sequence is that of Calcium-binding and spermatid-specific protein 1 (Cabs1) from Rattus norvegicus (Rat).